We begin with the raw amino-acid sequence, 384 residues long: Flap endonuclease 1 (384 aa).

The segment at 1–105 (MGIKGLTKLL…GELAKRKDKR (105 aa)) is N-domain. Residue Asp34 coordinates Mg(2+). Arg71 contributes to the DNA binding site. Asp87, Glu159, Glu161, Asp180, and Asp182 together coordinate Mg(2+). Residues 123-254 (EIEKLSKRTV…VNALKYIKQY (132 aa)) are I-domain. DNA is bound at residue Glu159. 2 residues coordinate DNA: Gly232 and Asp234. A Mg(2+)-binding site is contributed by Asp234. The interaction with PCNA stretch occupies residues 337–345 (GQNRLETFF). The interval 353–384 (STVGKRKEPEKGKGKFGAAGGKKSKGVTKRKF) is disordered. Positions 374 to 384 (KKSKGVTKRKF) are enriched in basic residues.

Belongs to the XPG/RAD2 endonuclease family. FEN1 subfamily. In terms of assembly, interacts with PCNA. Three molecules of FEN1 bind to one PCNA trimer with each molecule binding to one PCNA monomer. PCNA stimulates the nuclease activity without altering cleavage specificity. The cofactor is Mg(2+). In terms of processing, phosphorylated. Phosphorylation upon DNA damage induces relocalization to the nuclear plasma.

It localises to the nucleus. The protein localises to the nucleolus. The protein resides in the nucleoplasm. It is found in the mitochondrion. Its function is as follows. Structure-specific nuclease with 5'-flap endonuclease and 5'-3' exonuclease activities involved in DNA replication and repair. During DNA replication, cleaves the 5'-overhanging flap structure that is generated by displacement synthesis when DNA polymerase encounters the 5'-end of a downstream Okazaki fragment. It enters the flap from the 5'-end and then tracks to cleave the flap base, leaving a nick for ligation. Also involved in the long patch base excision repair (LP-BER) pathway, by cleaving within the apurinic/apyrimidinic (AP) site-terminated flap. Acts as a genome stabilization factor that prevents flaps from equilibrating into structures that lead to duplications and deletions. Also possesses 5'-3' exonuclease activity on nicked or gapped double-stranded DNA, and exhibits RNase H activity. Also involved in replication and repair of rDNA and in repairing mitochondrial DNA. The protein is Flap endonuclease 1 of Micromonas commoda (strain RCC299 / NOUM17 / CCMP2709) (Picoplanktonic green alga).